The sequence spans 325 residues: Pseudouridylate synthase TRUB2, mitochondrial (325 aa).

Asp101 functions as the Nucleophile in the catalytic mechanism. Positions 292–325 (QTEGVSRGNPDREAAEGPIPGPSRGAEGEGELRA) are disordered.

This sequence belongs to the pseudouridine synthase TruB family.

The protein resides in the mitochondrion matrix. It catalyses the reaction a uridine in mRNA = a pseudouridine in mRNA. The enzyme catalyses uridine(55) in tRNA = pseudouridine(55) in tRNA. Functionally, minor enzyme contributing to the isomerization of uridine to pseudouridine (pseudouridylation) of specific mitochondrial mRNAs (mt-mRNAs) such as COXI and COXIII mt-mRNAs, modulating the efficiency of mitochondrial protein synthesis without changes in transcript abundance or stability. Also catalyzes pseudouridylation of some tRNAs, including synthesis of pseudouridine(55) from uracil-55, in the psi GC loop of a subset of tRNAs. The chain is Pseudouridylate synthase TRUB2, mitochondrial from Xenopus tropicalis (Western clawed frog).